We begin with the raw amino-acid sequence, 405 residues long: Argininosuccinate synthase (405 aa).

ATP-binding positions include 12–20 and Ala-40; that span reads AYSGGLDTS. 2 residues coordinate L-citrulline: Tyr-92 and Ser-97. Position 122 (Gly-122) interacts with ATP. 3 residues coordinate L-aspartate: Thr-124, Asn-128, and Asp-129. Asn-128 is a binding site for L-citrulline. L-citrulline is bound by residues Arg-132, Ser-181, Ser-190, Glu-266, and Tyr-278.

This sequence belongs to the argininosuccinate synthase family. Type 1 subfamily. Homotetramer.

It localises to the cytoplasm. It carries out the reaction L-citrulline + L-aspartate + ATP = 2-(N(omega)-L-arginino)succinate + AMP + diphosphate + H(+). The protein operates within amino-acid biosynthesis; L-arginine biosynthesis; L-arginine from L-ornithine and carbamoyl phosphate: step 2/3. The sequence is that of Argininosuccinate synthase from Edwardsiella ictaluri (strain 93-146).